The following is a 402-amino-acid chain: MDSASIDAIHMNGIKSKYLYDILKGIVREKNYDVLETINVSEFLAELLDHMVNTIPNELFQTKVNNGRHTVGRKEDSEENEEAVYGTDIDDANDVHTRQLDDLKRISTHLTTNFKDKSQLPFTIVRICELCFDPFHYFKTYELDKFVNALQKCCLVRGAWRRYELKDVRELSNSQSDKEHIDCDQNDVALSKIPWLDEKMVSELTPFIKEIDTIMSVNLSFEDDEMDDDDDDNLKNQNNDRIITHQDDNIIVEEYYENEDQDDENTGFSNQVINDNNDSQEDDDEDSDYIEEDEGDEDEDDDDDEEEEEEEDGDEDEDEDKHFDIKVEEEAVKEDANTTRNELMNVSNNSDDSSLQNDTGIAISSQNDTRDLSKRRLPLSDENDGNYANPASFSKRNKASES.

The segment at 258 to 402 (NEDQDDENTG…FSKRNKASES (145 aa)) is disordered. Residues 266–277 (TGFSNQVINDNN) show a composition bias toward polar residues. A compositionally biased stretch (acidic residues) spans 278 to 319 (DSQEDDDEDSDYIEEDEGDEDEDDDDDEEEEEEEDGDEDEDE). Positions 320–337 (DKHFDIKVEEEAVKEDAN) are enriched in basic and acidic residues. Low complexity predominate over residues 345 to 358 (NVSNNSDDSSLQND).

The protein belongs to the PPP4R2 family. As to quaternary structure, regulatory subunit (R2) of the histone H2A phosphatase complex (HTP-C) consisting of PPH3, PSY2 and PSY4.

The protein localises to the nucleus. Functionally, regulatory subunit of the histone H2A phosphatase complex, which dephosphorylates H2AS128ph (gamma-H2A) that has been displaced from sites of DNA lesions in the double-stranded DNA break repair process. Dephosphorylation is necessary for efficient recovery from the DNA damage checkpoint. This chain is Serine/threonine-protein phosphatase 4 regulatory subunit 2 (PSY4), found in Candida glabrata (strain ATCC 2001 / BCRC 20586 / JCM 3761 / NBRC 0622 / NRRL Y-65 / CBS 138) (Yeast).